Consider the following 339-residue polypeptide: DNA-directed RNA polymerase subunit alpha (339 aa).

The alpha N-terminal domain (alpha-NTD) stretch occupies residues 1 to 233 (MVREEVAGST…DLFLPFLHAE (233 aa)). The tract at residues 264-339 (KKGIPLNCIF…IDLLKNKLSF (76 aa)) is alpha C-terminal domain (alpha-CTD).

Belongs to the RNA polymerase alpha chain family. In plastids the minimal PEP RNA polymerase catalytic core is composed of four subunits: alpha, beta, beta', and beta''. When a (nuclear-encoded) sigma factor is associated with the core the holoenzyme is formed, which can initiate transcription.

The protein resides in the plastid. It localises to the chloroplast. It catalyses the reaction RNA(n) + a ribonucleoside 5'-triphosphate = RNA(n+1) + diphosphate. Functionally, DNA-dependent RNA polymerase catalyzes the transcription of DNA into RNA using the four ribonucleoside triphosphates as substrates. The chain is DNA-directed RNA polymerase subunit alpha from Psathyrostachys stoloniformis.